A 664-amino-acid chain; its full sequence is MPQENNTFYITTPIYYPSGKLHIGHAYTTVAGDAMARYKRLKGFDVRYLTGTDEHGQKIQQKAEQENITPQEYVDRAAADIQKLWKQLEISNDDFIRTTEKRHKVVIEKVFQKLLDNGDIYLDEYEGWYSIPDETFYTETQLVDIERNEKGEVIGGKSPDSGHPVELIKEESYFFRMGKYADRLLKYYEENPTFIQPESRKNEMINNFIKPGLEDLAVSRTTFDWGVKVPENPKHVVYVWIDALFNYLTALGYDTENDELYQKYWPADVHLVGKEIVRFHTIYWPIMLMALDLPLPKQVFAHGWLLMKDGKMSKSKGNVVDPVTLIERYGLDELRYYLLREVPFGSDGVFTPEGFVERINYDLANDLGNLLNRTVAMINKYFDGQIGSYKGAVTEFDHTLTSVAEETVKAYEKAMENMEFSVALSTLWQLISRTNKYIDETAPWVLAKDPAKEEELRSVMYHLAESLRISAVLLQPFLTKTPEKMFEQLGITDESLKAWDSITAFGQLKDTKVQKGEPLFPRLEAEEEIAYIKGKMQGSAPAKEETKEEEPQEVDRLPEITIDQFMDVELRVAEVIEAEPVKKADRLLKLQLDLGFEKRQVVSGIAKHYTPEELVGKKLVCVTNLKPVKLRGELSQGMILAGEADGVLKVVSIDQSLPKGTRIK.

The short motif at 15 to 25 (YYPSGKLHIGH) is the 'HIGH' region element. Positions 311–315 (KMSKS) match the 'KMSKS' region motif. Residue lysine 314 participates in ATP binding. The segment at 536 to 556 (MQGSAPAKEETKEEEPQEVDR) is disordered. Residues 570–662 (LRVAEVIEAE…IDQSLPKGTR (93 aa)) form the tRNA-binding domain.

This sequence belongs to the class-I aminoacyl-tRNA synthetase family. MetG type 2B subfamily. Homodimer.

It is found in the cytoplasm. The catalysed reaction is tRNA(Met) + L-methionine + ATP = L-methionyl-tRNA(Met) + AMP + diphosphate. Its function is as follows. Is required not only for elongation of protein synthesis but also for the initiation of all mRNA translation through initiator tRNA(fMet) aminoacylation. This is Methionine--tRNA ligase (metG) from Bacillus subtilis (strain 168).